A 251-amino-acid polypeptide reads, in one-letter code: MAIHADTHDDLRLFQTGEHACGYWSGRQARDLVLDPHDPRLGAIYPQALAWGFRRSGDLVYRPHCERCRACVPVRIAVDAFHPDRSQRRCLARNRDLVVRVVAAERTDEQLALYRQYLKHRHPGGGMDQHGATEFDQFLIGGWSHGRFLEIREPAIAHLPGRLLAVAVTDVTEHALSAVYTFYAPEAAARSLGTFAILQQIQWAQRERRAHLYLGYWIDGHAKMNYKRRFSALEAYDGRHWRGLPAHASVD.

This sequence belongs to the R-transferase family. Bpt subfamily.

The protein resides in the cytoplasm. The enzyme catalyses N-terminal L-glutamyl-[protein] + L-leucyl-tRNA(Leu) = N-terminal L-leucyl-L-glutamyl-[protein] + tRNA(Leu) + H(+). It carries out the reaction N-terminal L-aspartyl-[protein] + L-leucyl-tRNA(Leu) = N-terminal L-leucyl-L-aspartyl-[protein] + tRNA(Leu) + H(+). Functions in the N-end rule pathway of protein degradation where it conjugates Leu from its aminoacyl-tRNA to the N-termini of proteins containing an N-terminal aspartate or glutamate. The polypeptide is Aspartate/glutamate leucyltransferase (Xanthomonas axonopodis pv. citri (strain 306)).